Here is a 304-residue protein sequence, read N- to C-terminus: Glycine--tRNA ligase alpha subunit (304 aa).

The protein belongs to the class-II aminoacyl-tRNA synthetase family. Tetramer of two alpha and two beta subunits.

Its subcellular location is the cytoplasm. The enzyme catalyses tRNA(Gly) + glycine + ATP = glycyl-tRNA(Gly) + AMP + diphosphate. The sequence is that of Glycine--tRNA ligase alpha subunit from Yersinia pseudotuberculosis serotype O:1b (strain IP 31758).